The sequence spans 138 residues: Protein X (138 aa).

Positions 24–48 (ESGGPAVSRPSAGSASRADSPLPSA) are disordered. The mitochondrial targeting sequence stretch occupies residues 68–113 (PCCLGFTCAEFGAMVSTMNFVTWHAKRQLGMPTKDLWTPYVRNQLL).

It belongs to the orthohepadnavirus protein X family. In terms of assembly, may form homodimer. May interact with host CEBPA, CFLAR, CREB1, DDB1, E4F1, HBXIP, HSPD1/HSP60, NFKBIA, POLR2E and SMAD4. Interacts with host SMC5-SMC6 complex and induces its degradation. Interacts with host TRPC4AP; leading to prevent ubiquitination of TRPC4AP. Interacts with host PLSCR1; this interaction promotes ubiquitination and degradation of HBx and impairs HBx-mediated cell proliferation. A fraction may be phosphorylated in insect cells and HepG2 cells, a human hepatoblastoma cell line. Phosphorylated in vitro by host protein kinase C or mitogen-activated protein kinase. N-acetylated in insect cells.

It is found in the host cytoplasm. The protein resides in the host nucleus. The protein localises to the host mitochondrion. In terms of biological role, multifunctional protein that plays a role in silencing host antiviral defenses and promoting viral transcription. Does not seem to be essential for HBV infection. May be directly involved in development of cirrhosis and liver cancer (hepatocellular carcinoma). Most of cytosolic activities involve modulation of cytosolic calcium. The effect on apoptosis is controversial depending on the cell types in which the studies have been conducted. May induce apoptosis by localizing in mitochondria and causing loss of mitochondrial membrane potential. May also modulate apoptosis by binding host CFLAR, a key regulator of the death-inducing signaling complex (DISC). Promotes viral transcription by using the host E3 ubiquitin ligase DDB1 to target the SMC5-SMC6 complex to proteasomal degradation. This host complex would otherwise bind to viral episomal DNA, and prevents its transcription. Moderately stimulates transcription of many different viral and cellular transcription elements. Promoters and enhancers stimulated by HBx contain DNA binding sites for NF-kappa-B, AP-1, AP-2, c-EBP, ATF/CREB, or the calcium-activated factor NF-AT. The polypeptide is Protein X (Arctic squirrel hepatitis virus (ASHV)).